The following is a 542-amino-acid chain: Chaperonin GroEL 2 (542 aa).

ATP is bound by residues 30 to 33 (TLGP), lysine 51, 87 to 91 (DGTTT), glycine 415, and aspartate 496.

It belongs to the chaperonin (HSP60) family. Forms a cylinder of 14 subunits composed of two heptameric rings stacked back-to-back. Interacts with the co-chaperonin GroES.

Its subcellular location is the cytoplasm. It catalyses the reaction ATP + H2O + a folded polypeptide = ADP + phosphate + an unfolded polypeptide.. Its function is as follows. Together with its co-chaperonin GroES, plays an essential role in assisting protein folding. The GroEL-GroES system forms a nano-cage that allows encapsulation of the non-native substrate proteins and provides a physical environment optimized to promote and accelerate protein folding. The chain is Chaperonin GroEL 2 from Chelativorans sp. (strain BNC1).